A 152-amino-acid polypeptide reads, in one-letter code: Superoxide dismutase [Cu-Zn] (152 aa).

3 residues coordinate Cu cation: His-45, His-47, and His-62. Cys-56 and Cys-145 are disulfide-bonded. His-62, His-70, His-79, and Asp-82 together coordinate Zn(2+). His-119 contributes to the Cu cation binding site.

This sequence belongs to the Cu-Zn superoxide dismutase family. In terms of assembly, homodimer. Cu cation serves as cofactor. The cofactor is Zn(2+).

It is found in the cytoplasm. The catalysed reaction is 2 superoxide + 2 H(+) = H2O2 + O2. Its function is as follows. Destroys radicals which are normally produced within the cells and which are toxic to biological systems. This Nicotiana plumbaginifolia (Leadwort-leaved tobacco) protein is Superoxide dismutase [Cu-Zn] (SODCC).